A 179-amino-acid polypeptide reads, in one-letter code: Probable inosine/xanthosine triphosphatase (179 aa).

13–18 provides a ligand contact to substrate; sequence STNPVK. Glutamine 70 serves as a coordination point for Mg(2+).

Belongs to the YjjX NTPase family. In terms of assembly, homodimer. The cofactor is Mg(2+). Requires Mn(2+) as cofactor.

It catalyses the reaction XTP + H2O = XDP + phosphate + H(+). The catalysed reaction is ITP + H2O = IDP + phosphate + H(+). Phosphatase that hydrolyzes non-canonical purine nucleotides such as XTP and ITP to their respective diphosphate derivatives. Probably excludes non-canonical purines from DNA/RNA precursor pool, thus preventing their incorporation into DNA/RNA and avoiding chromosomal lesions. This Methanocaldococcus jannaschii (strain ATCC 43067 / DSM 2661 / JAL-1 / JCM 10045 / NBRC 100440) (Methanococcus jannaschii) protein is Probable inosine/xanthosine triphosphatase.